A 483-amino-acid chain; its full sequence is SWI/SNF-related matrix-associated actin-dependent regulator of chromatin subfamily D member 3 (483 aa).

Residue alanine 2 is modified to N-acetylalanine. Residues 26 to 102 (VRPGMPSGAR…ARSRSAKRRK (77 aa)) form a disordered region. Residues 78–87 (QSQAQSQGQP) show a composition bias toward low complexity. A Phosphoserine modification is found at serine 178. In terms of domain architecture, SWIB/MDM2 spans 258 to 335 (YQPPQFKLDP…PQRLTALLLP (78 aa)).

It belongs to the SMARCD family. Component of the multiprotein chromatin-remodeling complexes SWI/SNF: SWI/SNF-A (BAF), SWI/SNF-B (PBAF) and related complexes. The canonical complex contains a catalytic subunit (either SMARCA4/BRG1/BAF190A or SMARCA2/BRM/BAF190B) and at least SMARCE1, ACTL6A/BAF53, SMARCC1/BAF155, SMARCC2/BAF170, and SMARCB1/SNF5/BAF47. Other subunits specific to each of the complexes may also be present permitting several possible combinations developmentally and tissue specific. Component of the BAF complex, which includes at least actin (ACTB), ARID1A/BAF250A, ARID1B/BAF250B, SMARCA2/BRM, SMARCA4/BRG1/BAF190A, ACTL6A/BAF53, ACTL6B/BAF53B, SMARCE1/BAF57, SMARCC1/BAF155, SMARCC2/BAF170, SMARCB1/SNF5/INI1, and one or more SMARCD1/BAF60A, SMARCD2/BAF60B, or SMARCD3/BAF60C. In muscle cells, the BAF complex also contains DPF3. Component of neural progenitors-specific chromatin remodeling complex (npBAF complex) composed of at least, ARID1A/BAF250A or ARID1B/BAF250B, SMARCD1/BAF60A, SMARCD3/BAF60C, SMARCA2/BRM/BAF190B, SMARCA4/BRG1/BAF190A, SMARCB1/BAF47, SMARCC1/BAF155, SMARCE1/BAF57, SMARCC2/BAF170, PHF10/BAF45A, ACTL6A/BAF53A and actin. Component of neuron-specific chromatin remodeling complex (nBAF complex) composed of at least, ARID1A/BAF250A or ARID1B/BAF250B, SMARCD1/BAF60A, SMARCD3/BAF60C, SMARCA2/BRM/BAF190B, SMARCA4/BRG1/BAF190A, SMARCB1/BAF47, SMARCC1/BAF155, SMARCE1/BAF57, SMARCC2/BAF170, DPF1/BAF45B, DPF3/BAF45C, ACTL6B/BAF53B and actin. May be a component of the SWI/SNF-B (PBAF) chromatin remodeling complex, at least composed of SMARCA4/BRG1, SMARCB1/BAF47/SNF5, ACTL6A/BAF53A or ACTL6B/BAF53B, SMARCE1/BAF57, SMARCD1/BAF60A, SMARCD2/BAF60B, perhaps SMARCD3/BAF60C, SMARCC1/BAF155, SMARCC2/BAF170, PBRM1/BAF180, ARID2/BAF200 and actin. Interacts with SMARCA4/BRG1/BAF190A. Component of SWI/SNF (GBAF) subcomplex, which includes at least BICRA or BICRAL (mutually exclusive), BRD9, SS18, SMARCA2/BRM, SMARCA4/BRG1/BAF190A, ACTL6A/BAF53, SMARCC1/BAF155, and SMARCD1/BAF60A. The precise distribution of the related SMARCD1, SMARCD2 and SMARCD3 proteins among these and other SWI/SNF nucleosome-remodeling complexes is not fully known. May allow recruitment of SWI/SNF containing complexes specifically to promoters where these factors are located. Also interacts with several nuclear receptors including PPARG/NR1C3, RXRA/NR1F1, ESR1, NR5A1, NR5A2/LRH1 and other transcriptional activators including the HLH protein SREBF1/SREBP1 and the homeobox protein PBX1. Interacts with PRDM1/BLIMP1. Isoform 2 and isoform 1 are expressed in brain, heart, kidney, placenta, prostate, salivary gland, spleen, testis, thyroid, trachea and uterus. Isoform 1 is also expressed in skeletal muscle and adipose tissue.

The protein resides in the nucleus. Involved in transcriptional activation and repression of select genes by chromatin remodeling (alteration of DNA-nucleosome topology). Component of SWI/SNF chromatin remodeling complexes that carry out key enzymatic activities, changing chromatin structure by altering DNA-histone contacts within a nucleosome in an ATP-dependent manner. Stimulates nuclear receptor mediated transcription. Belongs to the neural progenitors-specific chromatin remodeling complex (npBAF complex) and the neuron-specific chromatin remodeling complex (nBAF complex). During neural development a switch from a stem/progenitor to a postmitotic chromatin remodeling mechanism occurs as neurons exit the cell cycle and become committed to their adult state. The transition from proliferating neural stem/progenitor cells to postmitotic neurons requires a switch in subunit composition of the npBAF and nBAF complexes. As neural progenitors exit mitosis and differentiate into neurons, npBAF complexes which contain ACTL6A/BAF53A and PHF10/BAF45A, are exchanged for homologous alternative ACTL6B/BAF53B and DPF1/BAF45B or DPF3/BAF45C subunits in neuron-specific complexes (nBAF). The npBAF complex is essential for the self-renewal/proliferative capacity of the multipotent neural stem cells. The nBAF complex along with CREST plays a role regulating the activity of genes essential for dendrite growth. The sequence is that of SWI/SNF-related matrix-associated actin-dependent regulator of chromatin subfamily D member 3 (SMARCD3) from Homo sapiens (Human).